The primary structure comprises 123 residues: Large ribosomal subunit protein uL18 (123 aa).

Belongs to the universal ribosomal protein uL18 family. Part of the 50S ribosomal subunit; part of the 5S rRNA/L5/L18/L25 subcomplex. Contacts the 5S and 23S rRNAs.

Functionally, this is one of the proteins that bind and probably mediate the attachment of the 5S RNA into the large ribosomal subunit, where it forms part of the central protuberance. This is Large ribosomal subunit protein uL18 from Symbiobacterium thermophilum (strain DSM 24528 / JCM 14929 / IAM 14863 / T).